Reading from the N-terminus, the 253-residue chain is Chloride intracellular channel protein 4 (253 aa).

The residue at position 2 (A2) is an N-acetylalanine. The interval 2-101 (ALSMPLNGLK…EEFLEEVLCP (100 aa)) is required for insertion into the membrane. At S4 the chain carries Phosphoserine. The residue at position 24 (K24) is an N6-acetyllysine. A G-site motif is present at residues 35 to 38 (CPFS). The chain crosses the membrane as a helical span at residues 37–57 (FSQRLFMILWLKGVVFSVTTV). Positions 81 to 244 (NSEVKTDVNK…PSDKEVEIAY (164 aa)) constitute a GST C-terminal domain. K130 bears the N6-acetyllysine mark. A phosphoserine mark is found at S132, S167, and S236. The residue at position 244 (Y244) is a Phosphotyrosine.

The protein belongs to the chloride channel CLIC family. As to quaternary structure, monomer. Interacts with HRH3. In terms of tissue distribution, detected in brain, in cell bodies and dendrites of Purkinje cells in cerebellar neurons (at protein level). Expressed neonatal and adult cardiomyocytes (at protein level). Marked expression was found in hippocampus and cerebellum, and in many other tissues.

Its subcellular location is the cytoplasm. It is found in the cytoskeleton. The protein localises to the microtubule organizing center. It localises to the centrosome. The protein resides in the cytoplasmic vesicle membrane. Its subcellular location is the nucleus. It is found in the cell membrane. The protein localises to the mitochondrion. It localises to the cell junction. The protein resides in the endoplasmic reticulum membrane. The catalysed reaction is chloride(in) = chloride(out). The enzyme catalyses thiocyanate(in) = thiocyanate(out). It catalyses the reaction nitrate(in) = nitrate(out). It carries out the reaction iodide(out) = iodide(in). The catalysed reaction is bromide(in) = bromide(out). The enzyme catalyses fluoride(in) = fluoride(out). It catalyses the reaction choline(out) = choline(in). Its activity is regulated as follows. Channel activity is redox- and pH-regulated. Anion vs cation selectivity is enhanced when fully oxidized. In the soluble state, catalyzes glutaredoxin-like thiol disulfide exchange reactions with reduced glutathione as electron donor. Can insert into membranes and form voltage-dependent multi-ion conductive channels. Membrane insertion seems to be redox-regulated and may occur only under oxidizing conditions. Has alternate cellular functions like a potential role in angiogenesis or in maintaining apical-basolateral membrane polarity during mitosis and cytokinesis. Could also promote endothelial cell proliferation and regulate endothelial morphogenesis (tubulogenesis). Promotes cell-surface expression of HRH3. The chain is Chloride intracellular channel protein 4 (Clic4) from Rattus norvegicus (Rat).